Reading from the N-terminus, the 122-residue chain is Acidic phospholipase A2 Tpu-E6c (122 aa).

Intrachain disulfides connect cysteine 26–cysteine 115, cysteine 28–cysteine 44, cysteine 43–cysteine 95, cysteine 49–cysteine 122, cysteine 50–cysteine 88, cysteine 57–cysteine 81, and cysteine 75–cysteine 86. The Ca(2+) site is built by tyrosine 27, glycine 29, and glycine 31. The active site involves histidine 47. Aspartate 48 is a Ca(2+) binding site. Aspartate 89 is a catalytic residue.

In terms of assembly, monomer. The cofactor is Ca(2+). As to expression, expressed by the venom gland.

It is found in the secreted. It carries out the reaction a 1,2-diacyl-sn-glycero-3-phosphocholine + H2O = a 1-acyl-sn-glycero-3-phosphocholine + a fatty acid + H(+). Snake venom phospholipase A2 (PLA2) that impairs hemostasis. It weakly inhibits ADP-induced platelet aggregation when tested on platelet rich plasma from human and rabbit blood (15-25% of inhibition at 5-10 ug of enzyme), and dose-dependently inhibits blood coagulation, possibly by inhibiting thrombin activation. Exhibits high hydrolytic activities toward L-dipalmitoyl phosphatidylcholine. PLA2 catalyzes the calcium-dependent hydrolysis of the 2-acyl groups in 3-sn-phosphoglycerides. This is Acidic phospholipase A2 Tpu-E6c from Craspedocephalus puniceus (Flat-nosed pitviper).